A 221-amino-acid polypeptide reads, in one-letter code: Probable septum site-determining protein MinC (221 aa).

Belongs to the MinC family. In terms of assembly, interacts with MinD and FtsZ.

Its function is as follows. Cell division inhibitor that blocks the formation of polar Z ring septums. Rapidly oscillates between the poles of the cell to destabilize FtsZ filaments that have formed before they mature into polar Z rings. Prevents FtsZ polymerization. The polypeptide is Probable septum site-determining protein MinC (Prochlorococcus marinus (strain SARG / CCMP1375 / SS120)).